The sequence spans 120 residues: Large ribosomal subunit protein uL18 (120 aa).

It belongs to the universal ribosomal protein uL18 family. As to quaternary structure, part of the 50S ribosomal subunit; part of the 5S rRNA/L5/L18/L25 subcomplex. Contacts the 5S and 23S rRNAs.

Functionally, this is one of the proteins that bind and probably mediate the attachment of the 5S RNA into the large ribosomal subunit, where it forms part of the central protuberance. The chain is Large ribosomal subunit protein uL18 from Bacillus cytotoxicus (strain DSM 22905 / CIP 110041 / 391-98 / NVH 391-98).